Consider the following 1300-residue polypeptide: MGTGPAQTPRSTRAGPEPSPAPPGPGDTGDSDVTQEGSGPAGIRGGETVIRAGMGDSPGRGAPERRHKAQPGRARKYEWRPEGPTSMGSLGQREDLQDEDRNSAFTWKVQANNRAYNGQFKEKVILCWQRKKYKTNVIRTAKYNFYSFLPLNLYEQFHRVSNLFFLIIIILQSIPDISTLPWFSLSTPMVCLLFIRATRDLVDDMGRHKSDRAINNRPCQILMGKSFKQKKWQDLCVGDVVCLRKDNIVPADMLLLASTEPSSLCYVETVDIDGETNLKFRQALMVTHKELATIKKMASFQGTVTCEAPNSRMHHFVGCLEWNDKKYSLDIGNLLLRGCRIRNTDTCYGLVIYAGFDTKIMKNCGKIHLKRTKLDLLMNKLVVVIFISVVLVCLVLAFGFGFSVKEFKDHHYYLSGVHGSSVAAESFFVFWSFLILLSVTIPMSMFILSEFIYLGNSVFIDWDVQMYYKPQDVPAKARSTSLNDHLGQVEYIFSDKTGTLTQNILTFNKCCISGRVYGPDSEATTRPKENPYLWNKFADGKLLFHNAALLHLVRTNGDEAVREFWRLLAICHTVMVRESPRERPDQLLYQAASPDEGALVTAARNFGYVFLSRTQDTVTIMELGEERVYQVLAIMDFNSTRKRMSVLVRKPEGAICLYTKGADTVIFERLHRRGAMEFATEEALAAFAQETLRTLCLAYREVAEDIYEDWQQRHQEASLLLQNRAQALQQLLGATAIEDRLQDGVPETIKCLKKSNIKIWVLTGDKQETAVNIGFACELLSENMLILEEKEISRILETYWENSNNLLTRESLSQVKLALVINGDFLDKLLVSLRKEPRALAQNVNMDEAWQELGQSRRDFLYARRLSLLCRRFGLPLAAPPAQDSRARRSSEVLQERAFVDLASKCQAVICCRVTPKQKALIVALVKKYHQVVTLAIGDGANDINMIKTADVGVGLAGQEGMQAVQNSDFVLGQFCFLQRLLLVHGRWSYVRICKFLRYFFYKSMASMMVQVWFACYNGFTGQPLYEGWFLALFNLLYSTLPVLYIGLFEQDVSAEQSLEKPELYVVGQKDELFNYWVFVQAIAHGVTTSLVNFFMTLWISRDTAGPASFSDHQSFAVVVALSCLLSITMEVILIIKYWTALCVATILLSLGFYAIMTTTTQSFWLFRVSPTTFPFLYADLSVMSSPSILLVVLLSVSINTFPVLALRVIFPALKELRAKEEKVEEGPSEEIFTMEPLPHVHRESRARRSSYAFSHREGYANLITQGTILRRGPGVSSDIASESLDPSDEEAASSPKESQ.

A compositionally biased stretch (polar residues) spans 1-11 (MGTGPAQTPRS). Positions 1–98 (MGTGPAQTPR…SLGQREDLQD (98 aa)) are disordered. Over 1–149 (MGTGPAQTPR…TAKYNFYSFL (149 aa)) the chain is Cytoplasmic. The segment covering 65 to 74 (RRHKAQPGRA) has biased composition (basic residues). Residues 150 to 171 (PLNLYEQFHRVSNLFFLIIIIL) traverse the membrane as a helical segment. The Exoplasmic loop portion of the chain corresponds to 172-177 (QSIPDI). Residues 178 to 197 (STLPWFSLSTPMVCLLFIRA) traverse the membrane as a helical segment. The Cytoplasmic segment spans residues 198 to 381 (TRDLVDDMGR…TKLDLLMNKL (184 aa)). Residues 382–403 (VVVIFISVVLVCLVLAFGFGFS) traverse the membrane as a helical segment. At 404-430 (VKEFKDHHYYLSGVHGSSVAAESFFVF) the chain is on the exoplasmic loop side. A helical membrane pass occupies residues 431 to 452 (WSFLILLSVTIPMSMFILSEFI). Topologically, residues 453 to 995 (YLGNSVFIDW…GRWSYVRICK (543 aa)) are cytoplasmic. The active-site 4-aspartylphosphate intermediate is the aspartate 495. ATP-binding residues include aspartate 495, lysine 496, threonine 497, glutamate 596, phenylalanine 637, lysine 660, arginine 693, threonine 763, glycine 764, aspartate 765, arginine 913, and lysine 919. Residue aspartate 495 coordinates Mg(2+). Threonine 497 serves as a coordination point for Mg(2+). Position 939 (aspartate 939) interacts with Mg(2+). Residues asparagine 942 and aspartate 943 each contribute to the ATP site. Mg(2+) is bound at residue aspartate 943. Residues 996 to 1016 (FLRYFFYKSMASMMVQVWFAC) form a helical membrane-spanning segment. The Exoplasmic loop segment spans residues 1017 to 1028 (YNGFTGQPLYEG). The chain crosses the membrane as a helical span at residues 1029 to 1048 (WFLALFNLLYSTLPVLYIGL). Over 1049–1078 (FEQDVSAEQSLEKPELYVVGQKDELFNYWV) the chain is Cytoplasmic. The helical transmembrane segment at 1079-1100 (FVQAIAHGVTTSLVNFFMTLWI) threads the bilayer. At 1101-1112 (SRDTAGPASFSD) the chain is on the exoplasmic loop side. The helical transmembrane segment at 1113-1135 (HQSFAVVVALSCLLSITMEVILI) threads the bilayer. The Cytoplasmic segment spans residues 1136 to 1141 (IKYWTA). A helical transmembrane segment spans residues 1142–1162 (LCVATILLSLGFYAIMTTTTQ). Over 1163 to 1182 (SFWLFRVSPTTFPFLYADLS) the chain is Exoplasmic loop. The chain crosses the membrane as a helical span at residues 1183–1207 (VMSSPSILLVVLLSVSINTFPVLAL). Over 1208–1300 (RVIFPALKEL…EAASSPKESQ (93 aa)) the chain is Cytoplasmic. The interval 1272–1300 (RGPGVSSDIASESLDPSDEEAASSPKESQ) is disordered.

It belongs to the cation transport ATPase (P-type) (TC 3.A.3) family. Type IV subfamily. It depends on Mg(2+) as a cofactor. Isoform 3 was only detected in testis.

Its subcellular location is the cytoplasmic vesicle. The protein localises to the secretory vesicle. It localises to the acrosome membrane. It is found in the endoplasmic reticulum membrane. It catalyses the reaction ATP + H2O + phospholipidSide 1 = ADP + phosphate + phospholipidSide 2.. It carries out the reaction a 1,2-diacyl-sn-glycero-3-phospho-L-serine(out) + ATP + H2O = a 1,2-diacyl-sn-glycero-3-phospho-L-serine(in) + ADP + phosphate + H(+). Its function is as follows. P4-ATPase flippase which catalyzes the hydrolysis of ATP coupled to the transport of aminophospholipids from the outer to the inner leaflet of various membranes and ensures the maintenance of asymmetric distribution of phospholipids. Phospholipid translocation also seems to be implicated in vesicle formation and in uptake of lipid signaling molecules. May be responsible for the maintenance of asymmetric distribution of phosphatidylserine (PS) in spermatozoa membranes. Involved in acrosome reactions and binding of spermatozoa to zona pellucida. The polypeptide is Phospholipid-transporting ATPase IK (Homo sapiens (Human)).